The chain runs to 434 residues: MQVSVETTQGLERRLTISVPAEQIEKAVNDSLKNEAKRARIPGFRPGKVPVSVINKRYGKAIRQDITGEVMQRNFVEAIIAEKLNPAGAPTFVPGESDAENFQFVATFEIYPEVELKGLEDIAVEQPTSDVTDADVDTMIETLRKQHATYEAVERAAADGDKAKINFVGSIDGEEFEGGKAEDFELQLGSGRMIPGFESGVEGHKAGEEFDIEVTFPEDYHAENLKGKVAKFAITLNEVQAANLPEVNDEFATLFGVAEGGLEALKAEISKNMGRELEQALKANVKEQVLNGLLEQNEIELPASLIAGEVEVLRKQAMQRFGDQAANMPELPADLFTEQAERRVKVGLLLGEVIKTNELKAEEERVQGLIASMASAYEDPSEVVEYYNGNQEMMQNMRNVALEEQAVEALLKTAKVTEKAVNFEEFMNKATQQG.

The PPIase FKBP-type domain occupies 160-245 (GDKAKINFVG…LNEVQAANLP (86 aa)).

This sequence belongs to the FKBP-type PPIase family. Tig subfamily.

The protein localises to the cytoplasm. The enzyme catalyses [protein]-peptidylproline (omega=180) = [protein]-peptidylproline (omega=0). Functionally, involved in protein export. Acts as a chaperone by maintaining the newly synthesized protein in an open conformation. Functions as a peptidyl-prolyl cis-trans isomerase. The chain is Trigger factor from Shewanella woodyi (strain ATCC 51908 / MS32).